The primary structure comprises 111 residues: Ribosome-binding factor A (111 aa).

Belongs to the RbfA family. Monomer. Binds 30S ribosomal subunits, but not 50S ribosomal subunits or 70S ribosomes.

The protein localises to the cytoplasm. One of several proteins that assist in the late maturation steps of the functional core of the 30S ribosomal subunit. Associates with free 30S ribosomal subunits (but not with 30S subunits that are part of 70S ribosomes or polysomes). Required for efficient processing of 16S rRNA. May interact with the 5'-terminal helix region of 16S rRNA. This Helicobacter pylori (strain G27) protein is Ribosome-binding factor A.